Reading from the N-terminus, the 607-residue chain is UvrABC system protein C (607 aa).

Residues 16–94 (GRPGVYRMFD…IKEWRPPYNI (79 aa)) form the GIY-YIG domain. The UVR domain maps to 203–238 (HALTNELSTAMEEAAINLEFERAAELRDQIALLRRV).

This sequence belongs to the UvrC family. Interacts with UvrB in an incision complex.

It is found in the cytoplasm. Functionally, the UvrABC repair system catalyzes the recognition and processing of DNA lesions. UvrC both incises the 5' and 3' sides of the lesion. The N-terminal half is responsible for the 3' incision and the C-terminal half is responsible for the 5' incision. The sequence is that of UvrABC system protein C from Pseudomonas fluorescens (strain Pf0-1).